Consider the following 593-residue polypeptide: Mitoguardin 2 (593 aa).

Helical transmembrane passes span Met-11–Gly-31 and Pro-42–Ala-62. Disordered regions lie at residues Gly-103–Met-141 and Ser-196–Lys-231. Composition is skewed to low complexity over residues Ser-106–Ser-116 and Ile-123–Met-141. Position 132 is a phosphoserine (Ser-132). Thr-206 is modified (phosphothreonine). 3 positions are modified to phosphoserine: Ser-220, Ser-224, and Ser-228. Position 273 is a phosphothreonine (Thr-273). Ser-276 and Ser-295 each carry phosphoserine. The FFAT motif lies at Ser-292–Glu-298.

It belongs to the mitoguardin family. In terms of assembly, homodimer and heterodimer; forms heterodimers with MIGA1. Interacts with PLD6/MitoPLD. Interacts (via phosphorylated FFAT motif) with MOSPD2, VAPA and VAPB. In terms of processing, phosphorylation at Ser-295 of the FFAT motif activates interaction with MOSPD2, VAPA and VAPB.

It is found in the mitochondrion outer membrane. Functionally, regulator of mitochondrial fusion: acts by forming homo- and heterodimers at the mitochondrial outer membrane and facilitating the formation of PLD6/MitoPLD dimers. May act by regulating phospholipid metabolism via PLD6/MitoPLD. The chain is Mitoguardin 2 from Homo sapiens (Human).